A 552-amino-acid chain; its full sequence is MSESKKNPETKYIFVTGGVLSSLGKGITSSSVATLLKHSGFNVGILKIDPYINVDPGTMSPFEHGEVFVTYDGAETDLDIGHYERFLNTNFSSKHNFTTGQVYLSVIERERRGGYLGKTIQVIPHIVDEIKHRVRLAGEGKEFLVVELGGTVGDIEGLPFLEAMREMKHELGLERVISVHVTLIPLIKAAGELKTKPTQHSVQELRRIGITPQIIIARSEKPLPKELKKKLSLGCDVDYDSVIVAEDAPTIYQVPLNFMKEDILTPIARRFNMPKIEPKMEEWNRLVKQILAPKDEVTIAFVGKYLSLKESYKSLIEALTHAGANLDTKVNIKWCDSEEIESSGVEPLRYVDGILVPGGFGERGVKGKMEAIRFARENKIPFLGICLGMQLAMIEFARNVLGIAEANSMEFDPQTPEPIIYLIEDFIDQQGNKQVRTHTSPMGGTMRLGEYECGLKEGSQTKAAYQGESLIKERHRHRYEANPKYRERIEQAGLIVSGESEGLIEALELVDHPWFIGVQFHPEFTSRLQNPNPVILTFIQKSLELKKVDRDS.

Positions 1-273 are amidoligase domain; sequence MSESKKNPET…LTPIARRFNM (273 aa). CTP is bound at residue serine 21. Serine 21 provides a ligand contact to UTP. Residues 22–27 and aspartate 79 contribute to the ATP site; that span reads SLGKGI. Mg(2+) contacts are provided by aspartate 79 and glutamate 147. CTP is bound by residues 154–156, 194–199, and lysine 230; these read DIE and KTKPTQ. UTP contacts are provided by residues 194–199 and lysine 230; that span reads KTKPTQ. The region spanning 298 to 548 is the Glutamine amidotransferase type-1 domain; sequence TIAFVGKYLS…IQKSLELKKV (251 aa). L-glutamine is bound at residue glycine 359. Residue cysteine 386 is the Nucleophile; for glutamine hydrolysis of the active site. Residues 387–390, glutamate 410, and arginine 478 contribute to the L-glutamine site; that span reads LGMQ. Residues histidine 521 and glutamate 523 contribute to the active site.

This sequence belongs to the CTP synthase family. Homotetramer.

It carries out the reaction UTP + L-glutamine + ATP + H2O = CTP + L-glutamate + ADP + phosphate + 2 H(+). The catalysed reaction is L-glutamine + H2O = L-glutamate + NH4(+). It catalyses the reaction UTP + NH4(+) + ATP = CTP + ADP + phosphate + 2 H(+). Its pathway is pyrimidine metabolism; CTP biosynthesis via de novo pathway; CTP from UDP: step 2/2. Its activity is regulated as follows. Allosterically activated by GTP, when glutamine is the substrate; GTP has no effect on the reaction when ammonia is the substrate. The allosteric effector GTP functions by stabilizing the protein conformation that binds the tetrahedral intermediate(s) formed during glutamine hydrolysis. Inhibited by the product CTP, via allosteric rather than competitive inhibition. In terms of biological role, catalyzes the ATP-dependent amination of UTP to CTP with either L-glutamine or ammonia as the source of nitrogen. Regulates intracellular CTP levels through interactions with the four ribonucleotide triphosphates. The sequence is that of CTP synthase from Wolinella succinogenes (strain ATCC 29543 / DSM 1740 / CCUG 13145 / JCM 31913 / LMG 7466 / NCTC 11488 / FDC 602W) (Vibrio succinogenes).